We begin with the raw amino-acid sequence, 447 residues long: Maltoporin (447 aa).

Positions 1–26 are cleaved as a signal peptide; the sequence is MELRMKKVSVIAAAVAATLAAGSAFA.

Belongs to the porin LamB (TC 1.B.3) family. Homotrimer formed of three 18-stranded antiparallel beta-barrels, containing three independent channels.

It localises to the cell outer membrane. The enzyme catalyses beta-maltose(in) = beta-maltose(out). In terms of biological role, involved in the transport of maltose and maltodextrins. The chain is Maltoporin from Vibrio campbellii (strain ATCC BAA-1116).